Here is a 1004-residue protein sequence, read N- to C-terminus: Glutamate [NMDA] receptor subunit 1 (1004 aa).

A signal peptide spans 1-39; that stretch reads MAGTDSPAAARFVYRCLLFAPAIVVGLLLPLTLPPIAAA. Residues 40–585 are Extracellular-facing; that stretch reads QRHTASDNPS…TLVSFLQPFS (546 aa). N-linked (GlcNAc...) asparagine glycans are attached at residues asparagine 270, asparagine 326, asparagine 357, asparagine 409, asparagine 466, asparagine 493, and asparagine 513. Residues 542–544 and arginine 549 each bind glycine; that span reads PLT. A helical membrane pass occupies residues 586-606; sequence NTLWILVMVSVHVVALVLYLL. The Cytoplasmic segment spans residues 607–663; sequence DRFSPFGRFKLSHSDSNEEKALNLSSAVWFAWGVLLNSGIGEGTPRSFSARVLGMVW. The helical transmembrane segment at 664–684 threads the bilayer; sequence AGFAMIIVASYTANLAAFLVL. The Extracellular segment spans residues 685–843; sequence ERPKTKLSGI…KTPNTLGLKN (159 aa). A glycan (N-linked (GlcNAc...) asparagine) is linked at asparagine 705. Residues serine 715 and aspartate 759 each contribute to the glycine site. Residues 844-864 form a helical membrane-spanning segment; that stretch reads MAGVFILVGVGIAGGVGLIII. Over 865-1004 the chain is Cytoplasmic; sequence EVIYKKHQVK…YTSDVSHLVV (140 aa). Residues 980-1004 are disordered; that stretch reads TRPQQNILPPRYSPGYTSDVSHLVV. The segment covering 994 to 1004 has biased composition (polar residues); sequence GYTSDVSHLVV.

Belongs to the glutamate-gated ion channel (TC 1.A.10.1) family. In terms of assembly, forms a heteromeric NMDA channel with Nmdar2.

Its subcellular location is the cell membrane. It localises to the postsynaptic cell membrane. The protein localises to the postsynaptic density. Its function is as follows. NMDA receptor subtype of glutamate-gated ion channels with high calcium permeability and voltage-dependent sensitivity to magnesium. Mediated by glycine. This protein plays a key role in synaptic plasticity, synaptogenesis, excitotoxicity, memory acquisition and learning. It mediates neuronal functions in glutamate neurotransmission. Is involved in the cell surface targeting of NMDA receptors. Plays a role in associative learning and in long-term memory consolidation. In Drosophila persimilis (Fruit fly), this protein is Glutamate [NMDA] receptor subunit 1.